A 334-amino-acid chain; its full sequence is Methionine adenosyltransferase 2 subunit beta (334 aa).

NADP(+) is bound by residues 37–40, 60–62, 71–72, C93, R97, Y159, and L185; these read TGLL, FRR, and NL. A Phosphothreonine modification is found at T309. A required for interaction with MAT2A region spans residues 319 to 334; sequence LWPFLIDKRWRQTVFH.

The protein belongs to the dTDP-4-dehydrorhamnose reductase family. MAT2B subfamily. Heterotrimer; composed of a catalytic MAT2A homodimer that binds one regulatory MAT2B chain. Heterohexamer; composed of a central, catalytic MAT2A homotetramer flanked on either side by a regulatory MAT2B chain. NADP binding increases the affinity for MAT2A.

It participates in amino-acid biosynthesis; S-adenosyl-L-methionine biosynthesis; S-adenosyl-L-methionine from L-methionine: step 1/1. Regulatory subunit of S-adenosylmethionine synthetase 2, an enzyme that catalyzes the formation of S-adenosylmethionine from methionine and ATP. Regulates MAT2A catalytic activity by changing its kinetic properties, increasing its affinity for L-methionine. Can bind NADP (in vitro). The chain is Methionine adenosyltransferase 2 subunit beta (MAT2B) from Bos taurus (Bovine).